A 543-amino-acid chain; its full sequence is 2-succinyl-5-enolpyruvyl-6-hydroxy-3-cyclohexene-1-carboxylate synthase (543 aa).

The protein belongs to the TPP enzyme family. MenD subfamily. Homodimer. Requires Mg(2+) as cofactor. Mn(2+) serves as cofactor. The cofactor is thiamine diphosphate.

The enzyme catalyses isochorismate + 2-oxoglutarate + H(+) = 5-enolpyruvoyl-6-hydroxy-2-succinyl-cyclohex-3-ene-1-carboxylate + CO2. The protein operates within quinol/quinone metabolism; 1,4-dihydroxy-2-naphthoate biosynthesis; 1,4-dihydroxy-2-naphthoate from chorismate: step 2/7. It participates in quinol/quinone metabolism; menaquinone biosynthesis. Functionally, catalyzes the thiamine diphosphate-dependent decarboxylation of 2-oxoglutarate and the subsequent addition of the resulting succinic semialdehyde-thiamine pyrophosphate anion to isochorismate to yield 2-succinyl-5-enolpyruvyl-6-hydroxy-3-cyclohexene-1-carboxylate (SEPHCHC). The sequence is that of 2-succinyl-5-enolpyruvyl-6-hydroxy-3-cyclohexene-1-carboxylate synthase from Corynebacterium glutamicum (strain R).